Here is a 194-residue protein sequence, read N- to C-terminus: 3-isopropylmalate dehydratase small subunit (194 aa).

This sequence belongs to the LeuD family. LeuD type 1 subfamily. In terms of assembly, heterodimer of LeuC and LeuD.

It catalyses the reaction (2R,3S)-3-isopropylmalate = (2S)-2-isopropylmalate. It functions in the pathway amino-acid biosynthesis; L-leucine biosynthesis; L-leucine from 3-methyl-2-oxobutanoate: step 2/4. In terms of biological role, catalyzes the isomerization between 2-isopropylmalate and 3-isopropylmalate, via the formation of 2-isopropylmaleate. The sequence is that of 3-isopropylmalate dehydratase small subunit from Bacillus cereus (strain ATCC 14579 / DSM 31 / CCUG 7414 / JCM 2152 / NBRC 15305 / NCIMB 9373 / NCTC 2599 / NRRL B-3711).